The chain runs to 278 residues: Sulfur carrier protein FdhD (278 aa).

Cys121 serves as the catalytic Cysteine persulfide intermediate. Residue 260–265 participates in Mo-bis(molybdopterin guanine dinucleotide) binding; the sequence is FCKPGR.

The protein belongs to the FdhD family.

The protein localises to the cytoplasm. Functionally, required for formate dehydrogenase (FDH) activity. Acts as a sulfur carrier protein that transfers sulfur from IscS to the molybdenum cofactor prior to its insertion into FDH. This is Sulfur carrier protein FdhD from Klebsiella pneumoniae subsp. pneumoniae (strain ATCC 700721 / MGH 78578).